Reading from the N-terminus, the 372-residue chain is 3 beta-hydroxysteroid dehydrogenase/Delta 5--&gt;4-isomerase type 2 (372 aa).

Tyrosine 154 serves as the catalytic Proton acceptor. Lysine 158 is a binding site for NAD(+). A helical membrane pass occupies residues 287–307 (LTLMYWIGFLLEVVSFLLSPI).

It belongs to the 3-beta-HSD family. Expressed in adrenal gland, testis and ovary.

It localises to the endoplasmic reticulum membrane. It is found in the mitochondrion membrane. It carries out the reaction a 3beta-hydroxy-Delta(5)-steroid + NAD(+) = a 3-oxo-Delta(5)-steroid + NADH + H(+). It catalyses the reaction a 3-oxo-Delta(5)-steroid = a 3-oxo-Delta(4)-steroid. The enzyme catalyses pregnenolone + NAD(+) = pregn-5-ene-3,20-dione + NADH + H(+). The catalysed reaction is pregn-5-ene-3,20-dione = progesterone. It carries out the reaction 3beta-hydroxyandrost-5-en-17-one + NAD(+) = androst-5-ene-3,17-dione + NADH + H(+). It catalyses the reaction androst-5-ene-3,17-dione = androst-4-ene-3,17-dione. It participates in lipid metabolism; steroid biosynthesis. 3-beta-HSD is a bifunctional enzyme, that catalyzes the oxidative conversion of Delta(5)-ene-3-beta-hydroxy steroid, and the oxidative conversion of ketosteroids. The 3-beta-HSD enzymatic system plays a crucial role in the biosynthesis of all classes of hormonal steroids. The protein is 3 beta-hydroxysteroid dehydrogenase/Delta 5--&gt;4-isomerase type 2 of Homo sapiens (Human).